The sequence spans 504 residues: Probable GTP-binding protein OBGC2 (504 aa).

A compositionally biased stretch (basic and acidic residues) spans 24-39; that stretch reads AHRDARPALRLPELHA. Disordered regions lie at residues 24-46 and 93-122; these read AHRDARPALRLPELHATRRRRNN and VLAMPASPSTDAPKSPRRRSDKGKRSGVKK. In terms of domain architecture, Obg spans 73-276; that stretch reads HKYFDHAVVT…VSLELILRVV (204 aa). The segment covering 107-122 has biased composition (basic residues); it reads SPRRRSDKGKRSGVKK. The OBG-type G domain maps to 277 to 494; it reads ADVGLVGLPN…MLKEIRAALR (218 aa). Residues 283 to 290 and 337 to 341 contribute to the GTP site; these read GLPNAGKS and DLPGL. The span at 436–452 shows a compositional bias: polar residues; it reads SEDSLNGNTGEHNTSSE. A disordered region spans residues 436 to 463; the sequence is SEDSLNGNTGEHNTSSETKVEGGEKELR. Positions 453 to 463 are enriched in basic and acidic residues; sequence TKVEGGEKELR.

Belongs to the TRAFAC class OBG-HflX-like GTPase superfamily. OBG GTPase family.

In terms of biological role, may bind GTP and have GTPase activity. The chain is Probable GTP-binding protein OBGC2 from Oryza sativa subsp. japonica (Rice).